A 279-amino-acid chain; its full sequence is Shikimate dehydrogenase (NADP(+)) (279 aa).

Shikimate-binding positions include 20-22 (SRS) and Thr-67. Catalysis depends on Lys-71, which acts as the Proton acceptor. Asp-83 contributes to the NADP(+) binding site. Residues Asn-92 and Asp-108 each coordinate shikimate. Residues 134-138 (GAGGA) and Leu-223 contribute to the NADP(+) site. Tyr-225 is a shikimate binding site. Gly-246 lines the NADP(+) pocket.

The protein belongs to the shikimate dehydrogenase family. As to quaternary structure, homodimer.

The catalysed reaction is shikimate + NADP(+) = 3-dehydroshikimate + NADPH + H(+). Its pathway is metabolic intermediate biosynthesis; chorismate biosynthesis; chorismate from D-erythrose 4-phosphate and phosphoenolpyruvate: step 4/7. In terms of biological role, involved in the biosynthesis of the chorismate, which leads to the biosynthesis of aromatic amino acids. Catalyzes the reversible NADPH linked reduction of 3-dehydroshikimate (DHSA) to yield shikimate (SA). The chain is Shikimate dehydrogenase (NADP(+)) from Cereibacter sphaeroides (strain ATCC 17029 / ATH 2.4.9) (Rhodobacter sphaeroides).